Reading from the N-terminus, the 327-residue chain is MAMTAEVKDELSRLVVNSVSARRAEVASLLRFAGGLHIVSGRVVVEAEVDLGIIARRLRKDIYDLYGYNAVVHMLSASGIRKGTRYVVRVAKDGEALARQTGLLDLRGRPVRGLPAQVVGGSVADAEAAWRGAFLAHGSLTEPGRSSALEVSCPGPEAALALVGAARRLGVSAKAREVRGSDRVVVRDGEAIGALLTRMGAQDTRLTWEERRMRREVRATANRLANFDDANLRRSARAAVAAAARVERALEILGDTVPDHLASAGKLRVEHRQASLEELGRLADPPMTKDAVAGRIRRLLSMADRKAKQDGIPDTESAVTPDLLEDA.

The H-T-H motif DNA-binding region spans 275–308 (SLEELGRLADPPMTKDAVAGRIRRLLSMADRKAK). Residues 304–327 (DRKAKQDGIPDTESAVTPDLLEDA) form a disordered region.

The protein belongs to the WhiA family.

Involved in cell division and chromosome segregation. In Mycobacterium sp. (strain MCS), this protein is Probable cell division protein WhiA.